Consider the following 325-residue polypeptide: Glutarate 2-hydroxylase (325 aa).

Residues histidine 160, aspartate 162, and histidine 292 each coordinate Fe cation.

This sequence belongs to the glutarate hydroxylase family. Homotetramer. Fe(2+) is required as a cofactor.

The enzyme catalyses glutarate + 2-oxoglutarate + O2 = (S)-2-hydroxyglutarate + succinate + CO2. It functions in the pathway amino-acid degradation. Acts as an alpha-ketoglutarate-dependent dioxygenase catalyzing hydroxylation of glutarate (GA) to L-2-hydroxyglutarate (L2HG). Functions in a L-lysine degradation pathway that proceeds via cadaverine, glutarate and L-2-hydroxyglutarate. This is Glutarate 2-hydroxylase from Citrobacter koseri (strain ATCC BAA-895 / CDC 4225-83 / SGSC4696).